Consider the following 764-residue polypeptide: Oxysterol-binding protein-related protein 10 (764 aa).

The tract at residues 1–74 (MERAVQGTDG…PSGGGGRRRE (74 aa)) is disordered. 2 stretches are compositionally biased toward low complexity: residues 15 to 47 (NSSS…SAAA) and 55 to 65 (RSSPGSVAASP). S29 and S30 each carry phosphoserine. R38 bears the Omega-N-methylarginine mark. A phosphoserine mark is found at S57, S60, and S64. Residues 74 to 171 (EPALEGVLSK…WVTQLRACAK (98 aa)) form the PH domain. At T196 the chain carries Phosphothreonine. 3 positions are modified to phosphoserine: S201, S209, and S223. Disordered stretches follow at residues 304–335 (GQPS…NGTL) and 354–391 (AEDE…TELG). Positions 359–370 (TSQPEPEPNSGS) are enriched in polar residues. The span at 374-389 (LSEDEKSDNEDKEETE) shows a compositional bias: acidic residues. A 1,2-diacyl-sn-glycero-3-phospho-(1D-myo-inositol 4-phosphate)-binding positions include 413–418 (LTKVVL) and 477–480 (KPYN). A 1,2-diacyl-sn-glycero-3-phospho-L-serine is bound by residues 413 to 418 (LTKVVL) and N480. The segment at 501 to 520 (KRTASRSPASCHEHPMADDP) is disordered. A compositionally biased stretch (basic and acidic residues) spans 511–520 (CHEHPMADDP). Position 535 to 536 (535 to 536 (HH)) interacts with a 1,2-diacyl-sn-glycero-3-phospho-(1D-myo-inositol 4-phosphate). S561 lines the a 1,2-diacyl-sn-glycero-3-phospho-L-serine pocket. Residues 713–740 (DIDAATEQKRHLEEKQRVEERKRENLRT) adopt a coiled-coil conformation. The a 1,2-diacyl-sn-glycero-3-phospho-(1D-myo-inositol 4-phosphate) site is built by K721, E725, and R729.

It belongs to the OSBP family. As to quaternary structure, interacts with OSBPL9. Interacts with DIAPH1.

Its subcellular location is the cytoplasm. It localises to the cytoskeleton. Its function is as follows. Probable lipid transporter involved in lipid countertransport between the endoplasmic reticulum and the plasma membrane. Its ability to bind phosphatidylserine, suggests that it specifically exchanges phosphatidylserine with phosphatidylinositol 4-phosphate (PI4P), delivering phosphatidylserine to the plasma membrane in exchange for PI4P. Plays a role in negative regulation of lipid biosynthesis. Negatively regulates APOB secretion from hepatocytes. Binds cholesterol and acidic phospholipids. Also binds 25-hydroxycholesterol. Binds phosphatidylserine. The protein is Oxysterol-binding protein-related protein 10 (OSBPL10) of Homo sapiens (Human).